The primary structure comprises 289 residues: Light-independent protochlorophyllide reductase iron-sulfur ATP-binding protein (289 aa).

Residues 10-15 (GIGKST) and Lys-39 contribute to the ATP site. Ser-14 is a Mg(2+) binding site. Positions 95 and 129 each coordinate [4Fe-4S] cluster. 180–181 (NR) serves as a coordination point for ATP.

The protein belongs to the NifH/BchL/ChlL family. As to quaternary structure, homodimer. Protochlorophyllide reductase is composed of three subunits; ChlL, ChlN and ChlB. The cofactor is [4Fe-4S] cluster.

The protein resides in the plastid. It is found in the chloroplast. The enzyme catalyses chlorophyllide a + oxidized 2[4Fe-4S]-[ferredoxin] + 2 ADP + 2 phosphate = protochlorophyllide a + reduced 2[4Fe-4S]-[ferredoxin] + 2 ATP + 2 H2O. It functions in the pathway porphyrin-containing compound metabolism; chlorophyll biosynthesis (light-independent). Component of the dark-operative protochlorophyllide reductase (DPOR) that uses Mg-ATP and reduced ferredoxin to reduce ring D of protochlorophyllide (Pchlide) to form chlorophyllide a (Chlide). This reaction is light-independent. The L component serves as a unique electron donor to the NB-component of the complex, and binds Mg-ATP. This Tetradesmus obliquus (Green alga) protein is Light-independent protochlorophyllide reductase iron-sulfur ATP-binding protein.